The following is a 651-amino-acid chain: LysM domain receptor-like kinase 3 (651 aa).

A signal peptide spans 1 to 19; the sequence is MNLTFYIFFLSLLPSFSSS. Asparagine 2, asparagine 23, asparagine 42, asparagine 73, asparagine 86, asparagine 100, asparagine 114, and asparagine 177 each carry an N-linked (GlcNAc...) asparagine glycan. Over 20–236 the chain is Extracellular; sequence KPMNCSDTTR…TAKSGSHVPY (217 aa). 3 disulfide bridges follow: cysteine 24/cysteine 76, cysteine 31/cysteine 133, and cysteine 74/cysteine 131. Positions 142 to 186 constitute a LysM domain; sequence MSYVAMAGDSVQSLSSRFGVSMDRIEDVNGILNLDNITAGDLLYI. The disordered stretch occupies residues 196–216; that stretch reads YETSKINPPAPSPAPASSLAN. N-linked (GlcNAc...) asparagine glycans are attached at residues asparagine 218 and asparagine 225. The chain crosses the membrane as a helical span at residues 237 to 257; it reads IWIVGGLGVVLALLVLCILVC. At 258–651 the chain is on the cytoplasmic side; the sequence is ICLRSSSCSS…QVFSGLVQGR (394 aa). Threonine 330 carries the post-translational modification Phosphothreonine. Positions 341–628 constitute a Protein kinase domain; sequence FSDSNLLGHG…VVISLSQILL (288 aa). ATP is bound by residues 347–355 and lysine 368; that span reads LGHGNYGSV. Tyrosine 410 carries the phosphotyrosine modification. Catalysis depends on aspartate 464, which acts as the Proton acceptor. Residue serine 468 is modified to Phosphoserine. A phosphothreonine mark is found at threonine 500 and threonine 505. Residue tyrosine 513 is modified to Phosphotyrosine.

Belongs to the protein kinase superfamily. Ser/Thr protein kinase family.

It localises to the cell membrane. Functionally, putative Lysin motif (LysM) receptor kinase that may recognize microbe-derived N-acetylglucosamine (NAG)-containing ligands. The polypeptide is LysM domain receptor-like kinase 3 (LYK3) (Arabidopsis thaliana (Mouse-ear cress)).